The sequence spans 40 residues: Photosystem II reaction center protein J (40 aa).

Residues 8–28 (IPLWLVALVAGTGVLVVVGLF) form a helical membrane-spanning segment.

This sequence belongs to the PsbJ family. In terms of assembly, PSII is composed of 1 copy each of membrane proteins PsbA, PsbB, PsbC, PsbD, PsbE, PsbF, PsbH, PsbI, PsbJ, PsbK, PsbL, PsbM, PsbT, PsbX, PsbY, PsbZ, Psb30/Ycf12, peripheral proteins PsbO, CyanoQ (PsbQ), PsbU, PsbV and a large number of cofactors. It forms dimeric complexes.

The protein resides in the cellular thylakoid membrane. In terms of biological role, one of the components of the core complex of photosystem II (PSII). PSII is a light-driven water:plastoquinone oxidoreductase that uses light energy to abstract electrons from H(2)O, generating O(2) and a proton gradient subsequently used for ATP formation. It consists of a core antenna complex that captures photons, and an electron transfer chain that converts photonic excitation into a charge separation. This chain is Photosystem II reaction center protein J, found in Trichodesmium erythraeum (strain IMS101).